The primary structure comprises 361 residues: Nicotinate-nucleotide--dimethylbenzimidazole phosphoribosyltransferase (361 aa).

Residue Glu315 is the Proton acceptor of the active site.

The protein belongs to the CobT family.

It carries out the reaction 5,6-dimethylbenzimidazole + nicotinate beta-D-ribonucleotide = alpha-ribazole 5'-phosphate + nicotinate + H(+). It functions in the pathway nucleoside biosynthesis; alpha-ribazole biosynthesis; alpha-ribazole from 5,6-dimethylbenzimidazole: step 1/2. In terms of biological role, catalyzes the synthesis of alpha-ribazole-5'-phosphate from nicotinate mononucleotide (NAMN) and 5,6-dimethylbenzimidazole (DMB). The sequence is that of Nicotinate-nucleotide--dimethylbenzimidazole phosphoribosyltransferase from Clostridium perfringens (strain 13 / Type A).